Reading from the N-terminus, the 238-residue chain is tRNA1(Val) (adenine(37)-N6)-methyltransferase (238 aa).

It belongs to the methyltransferase superfamily. tRNA (adenine-N(6)-)-methyltransferase family.

It localises to the cytoplasm. The catalysed reaction is adenosine(37) in tRNA1(Val) + S-adenosyl-L-methionine = N(6)-methyladenosine(37) in tRNA1(Val) + S-adenosyl-L-homocysteine + H(+). Specifically methylates the adenine in position 37 of tRNA(1)(Val) (anticodon cmo5UAC). The chain is tRNA1(Val) (adenine(37)-N6)-methyltransferase from Shewanella sp. (strain W3-18-1).